The primary structure comprises 125 residues: Small ribosomal subunit protein uS13 (125 aa).

The disordered stretch occupies residues 95–125 (GLPLRGQRTKTNARTRKGKRKTVANKKIASK).

This sequence belongs to the universal ribosomal protein uS13 family. In terms of assembly, part of the 30S ribosomal subunit. Forms a loose heterodimer with protein S19. Forms two bridges to the 50S subunit in the 70S ribosome.

Its function is as follows. Located at the top of the head of the 30S subunit, it contacts several helices of the 16S rRNA. In the 70S ribosome it contacts the 23S rRNA (bridge B1a) and protein L5 of the 50S subunit (bridge B1b), connecting the 2 subunits; these bridges are implicated in subunit movement. Contacts the tRNAs in the A and P-sites. The sequence is that of Small ribosomal subunit protein uS13 from Borreliella burgdorferi (strain ATCC 35210 / DSM 4680 / CIP 102532 / B31) (Borrelia burgdorferi).